The following is a 429-amino-acid chain: Adenylosuccinate synthetase (429 aa).

GTP contacts are provided by residues 12 to 18 (GDEGKGK) and 40 to 42 (GHT). Residue D13 is the Proton acceptor of the active site. D13 and G40 together coordinate Mg(2+). Residues 13–16 (DEGK), 38–41 (NAGH), T129, R143, Q223, T238, and R302 each bind IMP. The Proton donor role is filled by H41. 298 to 304 (VVTGRKR) lines the substrate pocket. GTP is bound by residues R304, 330–332 (KLD), and 412–414 (STS).

This sequence belongs to the adenylosuccinate synthetase family. In terms of assembly, homodimer. It depends on Mg(2+) as a cofactor.

Its subcellular location is the cytoplasm. The catalysed reaction is IMP + L-aspartate + GTP = N(6)-(1,2-dicarboxyethyl)-AMP + GDP + phosphate + 2 H(+). Its pathway is purine metabolism; AMP biosynthesis via de novo pathway; AMP from IMP: step 1/2. Functionally, plays an important role in the de novo pathway of purine nucleotide biosynthesis. Catalyzes the first committed step in the biosynthesis of AMP from IMP. This chain is Adenylosuccinate synthetase, found in Bartonella henselae (strain ATCC 49882 / DSM 28221 / CCUG 30454 / Houston 1) (Rochalimaea henselae).